We begin with the raw amino-acid sequence, 81 residues long: Small ribosomal subunit protein bS16 (81 aa).

The protein belongs to the bacterial ribosomal protein bS16 family.

This chain is Small ribosomal subunit protein bS16, found in Clostridium botulinum (strain Eklund 17B / Type B).